The primary structure comprises 380 residues: Probable tRNA sulfurtransferase (380 aa).

The 105-residue stretch at 58–162 folds into the THUMP domain; the sequence is EEVIERLKKV…MAFVYAGVIE (105 aa). ATP-binding positions include 178-179, 203-204, Arg260, Gly282, and Gln291; these read LL and YF.

The protein belongs to the ThiI family.

It is found in the cytoplasm. The catalysed reaction is [ThiI sulfur-carrier protein]-S-sulfanyl-L-cysteine + a uridine in tRNA + 2 reduced [2Fe-2S]-[ferredoxin] + ATP + H(+) = [ThiI sulfur-carrier protein]-L-cysteine + a 4-thiouridine in tRNA + 2 oxidized [2Fe-2S]-[ferredoxin] + AMP + diphosphate. It carries out the reaction [ThiS sulfur-carrier protein]-C-terminal Gly-Gly-AMP + S-sulfanyl-L-cysteinyl-[cysteine desulfurase] + AH2 = [ThiS sulfur-carrier protein]-C-terminal-Gly-aminoethanethioate + L-cysteinyl-[cysteine desulfurase] + A + AMP + 2 H(+). The protein operates within cofactor biosynthesis; thiamine diphosphate biosynthesis. Functionally, catalyzes the ATP-dependent transfer of a sulfur to tRNA to produce 4-thiouridine in position 8 of tRNAs, which functions as a near-UV photosensor. Also catalyzes the transfer of sulfur to the sulfur carrier protein ThiS, forming ThiS-thiocarboxylate. This is a step in the synthesis of thiazole, in the thiamine biosynthesis pathway. The sulfur is donated as persulfide by IscS. This is Probable tRNA sulfurtransferase from Thermoanaerobacter sp. (strain X514).